We begin with the raw amino-acid sequence, 31 residues long: ARRRRSSSRPIRRRRPRRRTTRRRRAGRRRR.

The segment at 1-31 (ARRRRSSSRPIRRRRPRRRTTRRRRAGRRRR) is disordered.

In terms of tissue distribution, testis.

It localises to the nucleus. The protein localises to the chromosome. Functionally, protamines substitute for histones in the chromatin of sperm during the haploid phase of spermatogenesis. They compact sperm DNA into a highly condensed, stable and inactive complex. The protein is Protamine-YI of Clupea harengus (Atlantic herring).